The sequence spans 481 residues: Glutamate mutase epsilon subunit (481 aa).

An L-glutamate-binding site is contributed by R67. G69 lines the adenosylcob(III)alamin pocket. An L-glutamate-binding site is contributed by R99. N122 lines the adenosylcob(III)alamin pocket. L-glutamate-binding positions include 148–149 (RH), E170, and Y176. P179 contacts adenosylcob(III)alamin. Position 180 (Y180) interacts with L-glutamate. 4 residues coordinate adenosylcob(III)alamin: F296, K325, E329, and I333.

It belongs to the methylaspartate mutase GlmE subunit family. Heterotetramer composed of 2 epsilon subunits (GlmE) and 2 sigma subunits (GlmS). GlmE exists as a homodimer and GlmS as a monomer. It depends on adenosylcob(III)alamin as a cofactor.

The catalysed reaction is (2S,3S)-3-methyl-L-aspartate = L-glutamate. The protein operates within amino-acid degradation; L-glutamate degradation via mesaconate pathway; acetate and pyruvate from L-glutamate: step 1/4. Functionally, catalyzes the carbon skeleton rearrangement of L-glutamate to L-threo-3-methylaspartate ((2S,3S)-3-methylaspartate). This is Glutamate mutase epsilon subunit from Escherichia coli O157:H7.